The primary structure comprises 957 residues: Collagen alpha-1(XXI) chain (957 aa).

An N-terminal signal peptide occupies residues 1-22; sequence MAHYITFLCMVLVLLLQNSVLA. The region spanning 37–211 is the VWFA domain; the sequence is DLVFILDGSY…KIREVMKQKL (175 aa). An N-linked (GlcNAc...) asparagine glycan is attached at Asn-62. Residues 230 to 412 enclose the Laminin G-like domain; it reads GFDILLGLDV…VQKLRIYCDP (183 aa). 3 consecutive Collagen-like domains span residues 448–500, 501–542, and 543–594; these read PGKP…GARG, LPGY…GDKG, and SPGF…SPGA. 2 disordered regions span residues 448-786 and 825-938; these read PGKP…KPGR and GSPG…ICDP. 2 stretches are compositionally biased toward low complexity: residues 451–462 and 471–481; these read PGLQGPKGDPGL and QPGQDGKPGYQ. Positions 507–517 are enriched in basic and acidic residues; the sequence is EPGRDGDKGDR. Composition is skewed to low complexity over residues 618–637 and 705–729; these read QKGE…PGMP and EKGI…IQGH. Collagen-like domains follow at residues 681 to 733, 734 to 787, 825 to 882, and 884 to 934; these read SPGE…HGAK, GERG…PGRE, GSPG…GSQG, and GYPG…GPPG. Over residues 732-742 the composition is skewed to basic and acidic residues; the sequence is AKGERGEKGEP. Residues 829–838 show a composition bias toward pro residues; the sequence is IPGPPGPIGP. Residues 839–874 are compositionally biased toward low complexity; it reads EGPRGLPGLPGRDGVPGLVGVPGRPGVRGLKGLPGR. The segment covering 889-900 has biased composition (pro residues); it reads QGPPGPPGPEGP.

This sequence belongs to the fibril-associated collagens with interrupted helices (FACIT) family. In terms of tissue distribution, highly expressed in lymph node, jejunum, pancreas, stomach, trachea, testis, uterus and placenta; moderately expressed in brain, colon, lung, prostate, spinal cord, salivary gland and vascular smooth-muscle cells and very weakly expressed in heart, liver, kidney, bone marrow, spleen, thymus, skeletal muscle, adrenal gland and peripheral leukocytes. Expression in heart was higher in the right ventricle and atrium than in the left ventricle and atrium.

The protein localises to the secreted. It localises to the extracellular space. Its subcellular location is the extracellular matrix. The protein resides in the cytoplasm. The protein is Collagen alpha-1(XXI) chain (COL21A1) of Homo sapiens (Human).